We begin with the raw amino-acid sequence, 592 residues long: Alanine aminotransferase, mitochondrial (592 aa).

The transit peptide at methionine 1 to histidine 64 directs the protein to the mitochondrion. Serine 77 carries the phosphoserine modification. 5 residues coordinate pyridoxal 5'-phosphate: alanine 258, serine 259, tyrosine 284, asparagine 340, and serine 409. At lysine 412 the chain carries N6-(pyridoxal phosphate)lysine. Arginine 421 is a binding site for pyridoxal 5'-phosphate.

This sequence belongs to the class-I pyridoxal-phosphate-dependent aminotransferase family. Alanine aminotransferase subfamily. As to quaternary structure, homodimer. Pyridoxal 5'-phosphate is required as a cofactor.

It is found in the mitochondrion matrix. The enzyme catalyses L-alanine + 2-oxoglutarate = pyruvate + L-glutamate. The protein operates within amino-acid degradation; L-alanine degradation via transaminase pathway; pyruvate from L-alanine: step 1/1. Its function is as follows. Alanine aminotransferase involved in both alanine biosynthesis and utilization. Under respiratory conditions, constitutes the sole pathway for alanine biosynthesis and catabolism. Under fermentative conditions, it plays a catabolic role and alanine is mainly synthesized through an alternative pathway. The polypeptide is Alanine aminotransferase, mitochondrial (ALT1) (Saccharomyces cerevisiae (strain ATCC 204508 / S288c) (Baker's yeast)).